Consider the following 121-residue polypeptide: Outer membrane lipoprotein BBA14 (121 aa).

A signal peptide spans 1-19; it reads MQIKNFPFLFLLNSLIIFS. A lipid anchor (N-palmitoyl cysteine) is attached at cysteine 20. Residue cysteine 20 is the site of S-diacylglycerol cysteine attachment.

It localises to the cell outer membrane. Its function is as follows. Outer membrane lipoprotein that could act as a component of a potential toxin-antitoxin system in B.burgdorferi which could serve as a plasmid stabilization mechanism in a growing bacterial population. The sequence is that of Outer membrane lipoprotein BBA14 from Borreliella burgdorferi (strain ATCC 35210 / DSM 4680 / CIP 102532 / B31) (Borrelia burgdorferi).